Here is a 417-residue protein sequence, read N- to C-terminus: F-box protein At3g07870 (417 aa).

Residues 22–68 (GGGLESLPEDIIADIFSRLPISSIARLMFVCRSWRSVLTQHGRLSSS) enclose the F-box domain.

This is F-box protein At3g07870 from Arabidopsis thaliana (Mouse-ear cress).